A 265-amino-acid polypeptide reads, in one-letter code: Glutamate racemase (265 aa).

Residues 7–8 (DS) and 39–40 (YG) each bind substrate. Cys70 acts as the Proton donor/acceptor in catalysis. 71–72 (NT) provides a ligand contact to substrate. Cys177 acts as the Proton donor/acceptor in catalysis.

This sequence belongs to the aspartate/glutamate racemases family.

The catalysed reaction is L-glutamate = D-glutamate. It functions in the pathway cell wall biogenesis; peptidoglycan biosynthesis. Provides the (R)-glutamate required for cell wall biosynthesis. The sequence is that of Glutamate racemase from Prochlorococcus marinus (strain NATL2A).